The following is a 54-amino-acid chain: Ferredoxin (54 aa).

4Fe-4S ferredoxin-type domains are found at residues 2–25 and 26–54; these read YVIN…IQQG and SIYA…NPED. The [4Fe-4S] cluster site is built by C8, C11, C14, C18, C35, C38, C41, and C45.

[4Fe-4S] cluster is required as a cofactor.

In terms of biological role, ferredoxins are iron-sulfur proteins that transfer electrons in a wide variety of metabolic reactions. The chain is Ferredoxin from Peptoniphilus asaccharolyticus (Peptostreptococcus asaccharolyticus).